The following is a 350-amino-acid chain: Nicotinate-nucleotide--dimethylbenzimidazole phosphoribosyltransferase (350 aa).

The active-site Proton acceptor is the Glu-317.

Belongs to the CobT family.

It carries out the reaction 5,6-dimethylbenzimidazole + nicotinate beta-D-ribonucleotide = alpha-ribazole 5'-phosphate + nicotinate + H(+). Its pathway is nucleoside biosynthesis; alpha-ribazole biosynthesis; alpha-ribazole from 5,6-dimethylbenzimidazole: step 1/2. In terms of biological role, catalyzes the synthesis of alpha-ribazole-5'-phosphate from nicotinate mononucleotide (NAMN) and 5,6-dimethylbenzimidazole (DMB). The protein is Nicotinate-nucleotide--dimethylbenzimidazole phosphoribosyltransferase of Shewanella sp. (strain ANA-3).